We begin with the raw amino-acid sequence, 878 residues long: Phosphoenolpyruvate carboxylase (878 aa).

Active-site residues include H140 and K545.

It belongs to the PEPCase type 1 family. Mg(2+) is required as a cofactor.

The enzyme catalyses oxaloacetate + phosphate = phosphoenolpyruvate + hydrogencarbonate. Functionally, forms oxaloacetate, a four-carbon dicarboxylic acid source for the tricarboxylic acid cycle. This Pseudomonas aeruginosa (strain ATCC 15692 / DSM 22644 / CIP 104116 / JCM 14847 / LMG 12228 / 1C / PRS 101 / PAO1) protein is Phosphoenolpyruvate carboxylase.